Here is a 123-residue protein sequence, read N- to C-terminus: CD59A glycoprotein (123 aa).

Positions M1–S23 are cleaved as a signal peptide. Positions L24 to S96 constitute a UPAR/Ly6 domain. 5 disulfides stabilise this stretch: C26-C50, C29-C37, C43-C63, C69-C87, and C88-C93. N40 carries an N-linked (GlcNAc...) asparagine glycan. An N-linked (GlcNAc...) asparagine glycan is attached at N94. Positions D97 to L123 are cleaved as a propeptide — removed in mature form.

Interacts with T-cell surface antigen CD2. N- and O-glycosylated. As to expression, expressed in all tissues examined (liver, kidney, spleen, thymus, brain and heart). Low levels in thymus. Also expressed in mononuclear cells, erythrocytes and platelets. Barely detected in neutrophils.

It localises to the cell membrane. The protein localises to the secreted. Potent inhibitor of the complement membrane attack complex (MAC) action, which protects self-cells from damage during complement activation. Acts by binding to the beta-haipins of C8 (C8A and C8B) components of the assembling MAC, forming an intermolecular beta-sheet that prevents incorporation of the multiple copies of C9 required for complete formation of the osmolytic pore. The polypeptide is CD59A glycoprotein (Mus musculus (Mouse)).